The sequence spans 28 residues: MATQGFSCLLLSVSEIDLSMKRQYKQIR.

The protein belongs to the humanin family. Highly expressed in testis. Also expressed in kidney, heart, skeletal muscles and brain.

Its subcellular location is the secreted. It localises to the cytoplasm. In terms of biological role, plays a role as a neuroprotective and antiapoptotic factor. The sequence is that of Humanin-like 4 from Homo sapiens (Human).